We begin with the raw amino-acid sequence, 101 residues long: Movement protein (101 aa).

The chain crosses the membrane as a helical span at residues 30–50; sequence EVAILSFVALICIYLLYLWVL.

The protein belongs to the mastrevirus movement protein family. In terms of assembly, interacts with the capsid protein (CP). Part of a MP-CP-viral DNA complex.

It is found in the host membrane. Involved in the viral transport within, and between cells. The polypeptide is Movement protein (Maize streak virus genotype D (isolate Raw) (MSV)).